We begin with the raw amino-acid sequence, 130 residues long: Iron-sulfur cluster assembly 1 homolog, mitochondrial (130 aa).

The transit peptide at 1-24 (MATRVVATATVRAVKGRKLIPTRA) directs the protein to the mitochondrion. Residues cysteine 58, cysteine 122, and cysteine 124 each contribute to the Fe cation site.

Belongs to the HesB/IscA family. Interacts with cry. In terms of tissue distribution, detected in head.

It localises to the mitochondrion. Its function is as follows. Involved in the assembly of mitochondrial iron-sulfur proteins. Probably involved in the binding of an intermediate of Fe/S cluster assembly. Required for maintenance of circadian rhythms under constant darkness. The chain is Iron-sulfur cluster assembly 1 homolog, mitochondrial from Drosophila melanogaster (Fruit fly).